We begin with the raw amino-acid sequence, 125 residues long: Putative zinc finger A20 and AN1 domain-containing stress-associated protein 8 (125 aa).

An A20-type zinc finger spans residues 2–36 (TGEPSLCIRGCGFFSTSQTKNLCSKCYNDFLKDES). Zn(2+)-binding residues include cysteine 8, cysteine 12, cysteine 24, cysteine 27, cysteine 80, cysteine 82, histidine 96, and cysteine 98. The AN1-type; degenerate zinc-finger motif lies at 61 to 106 (LGSKGGCACKKKVGLLGFHCRCGHLFFASHRYPEEHSCPSDYKSAA).

Functionally, may be involved in environmental stress response. In Arabidopsis thaliana (Mouse-ear cress), this protein is Putative zinc finger A20 and AN1 domain-containing stress-associated protein 8 (SAP8).